Consider the following 416-residue polypeptide: Cytochrome P450 monooxygenase PikC (416 aa).

Residues glutamate 94, 187-191 (AQTAM), and 238-246 (HILLVAGHE) each bind substrate. Cysteine 354 serves as a coordination point for heme.

The protein belongs to the cytochrome P450 family. Heme serves as cofactor.

The catalysed reaction is narbomycin + 2 reduced [2Fe-2S]-[ferredoxin] + O2 + 2 H(+) = pikromycin + 2 oxidized [2Fe-2S]-[ferredoxin] + H2O. It carries out the reaction narbomycin + 2 reduced [2Fe-2S]-[ferredoxin] + O2 + 2 H(+) = neopikromycin + 2 oxidized [2Fe-2S]-[ferredoxin] + H2O. It catalyses the reaction narbomycin + 4 reduced [2Fe-2S]-[ferredoxin] + 2 O2 + 4 H(+) = novapikromycin + 4 oxidized [2Fe-2S]-[ferredoxin] + 2 H2O. The enzyme catalyses 10-deoxymethymycin + 2 reduced [2Fe-2S]-[ferredoxin] + O2 + 2 H(+) = methymycin + 2 oxidized [2Fe-2S]-[ferredoxin] + H2O. The catalysed reaction is 10-deoxymethymycin + 2 reduced [2Fe-2S]-[ferredoxin] + O2 + 2 H(+) = neomethymycin + 2 oxidized [2Fe-2S]-[ferredoxin] + H2O. It carries out the reaction 10-deoxymethymycin + 4 reduced [2Fe-2S]-[ferredoxin] + 2 O2 + 4 H(+) = novamethymycin + 4 oxidized [2Fe-2S]-[ferredoxin] + 2 H2O. Its pathway is antibiotic biosynthesis. Catalyzes the hydroxylation of narbomycin to give rise to pikromycin, and of 10-deoxymethymycin (YC-17) to give rise to methymycin and neomethymycin during macrolide antibiotic biosynthesis. In addition, produces low amounts of neopicromycin, novapikromycin and novamethymycin. Requires the participation of a ferredoxin and a ferredoxin reductase for the transfer of electrons from NADPH to the monooxygenase. The polypeptide is Cytochrome P450 monooxygenase PikC (Streptomyces venezuelae).